The primary structure comprises 48 residues: Small, acid-soluble spore protein P (48 aa).

Over residues 1–12 the composition is skewed to basic and acidic residues; the sequence is MTNKNDGKDMRK. The tract at residues 1–48 is disordered; the sequence is MTNKNDGKDMRKNAPKGDNPGQPEPLDGSKKVKNRNHTRQKHNTSHDM. Basic residues predominate over residues 31–48; it reads KVKNRNHTRQKHNTSHDM.

Belongs to the SspP family.

It is found in the spore core. This Geobacillus kaustophilus (strain HTA426) protein is Small, acid-soluble spore protein P.